A 325-amino-acid chain; its full sequence is Reaction center protein M chain (325 aa).

3 consecutive transmembrane segments (helical) span residues 53–79 (LGFT…LASV), 111–140 (EGGW…AEAL), and 143–168 (SQHL…PVMM). His-182 and His-202 together coordinate (7R,8Z)-bacteriochlorophyll b. Residues 198–226 (YNPFHMLSIAFLYGSALLFAMHGATILAV) form a helical membrane-spanning segment. 2 residues coordinate Fe cation: His-219 and Glu-234. An a ubiquinone-binding site is contributed by Trp-252. Residue His-266 participates in Fe cation binding.

The protein belongs to the reaction center PufL/M/PsbA/D family. In terms of assembly, reaction center is composed of four bacteriochlorophylls, two bacteriopheophytins, two ubiquinones, one iron, and two highly hydrophobic polypeptide chains (designated L and M).

Its subcellular location is the cellular chromatophore membrane. Functionally, the reaction center is a membrane-bound complex that mediates the initial photochemical event in the electron transfer process of photosynthesis. The sequence is that of Reaction center protein M chain (pufM) from Allochromatium vinosum (strain ATCC 17899 / DSM 180 / NBRC 103801 / NCIMB 10441 / D) (Chromatium vinosum).